A 307-amino-acid polypeptide reads, in one-letter code: tRNA dimethylallyltransferase (307 aa).

9 to 16 is a binding site for ATP; it reads GPTAIGKT. 11–16 contributes to the substrate binding site; sequence TAIGKT. Interaction with substrate tRNA regions lie at residues 34 to 37 and 164 to 168; these read DSRQ and QRMMR.

Belongs to the IPP transferase family. Monomer. It depends on Mg(2+) as a cofactor.

The catalysed reaction is adenosine(37) in tRNA + dimethylallyl diphosphate = N(6)-dimethylallyladenosine(37) in tRNA + diphosphate. In terms of biological role, catalyzes the transfer of a dimethylallyl group onto the adenine at position 37 in tRNAs that read codons beginning with uridine, leading to the formation of N6-(dimethylallyl)adenosine (i(6)A). This Flavobacterium psychrophilum (strain ATCC 49511 / DSM 21280 / CIP 103535 / JIP02/86) protein is tRNA dimethylallyltransferase.